The following is a 509-amino-acid chain: Probable xyloglucan galactosyltransferase GT12 (509 aa).

Over 1 to 3 (MMK) the chain is Cytoplasmic. A helical; Signal-anchor for type II membrane protein transmembrane segment spans residues 4-24 (PVPKLWVVISSAFVFCLLVLF). Over 25 to 509 (QINKSDLIEA…KLEIIHEKTA (485 aa)) the chain is Lumenal. 8 N-linked (GlcNAc...) asparagine glycosylation sites follow: N27, N59, N65, N169, N170, N195, N257, and N416.

Belongs to the glycosyltransferase 47 family. In terms of tissue distribution, expressed in pollen grains.

Its subcellular location is the golgi apparatus membrane. In terms of biological role, functions in xyloglucan synthesis by adding side chains to the xylosylated glucan backbone. Involved in the galactosylation of hemicellulose xyloglucan. The protein is Probable xyloglucan galactosyltransferase GT12 of Arabidopsis thaliana (Mouse-ear cress).